The chain runs to 447 residues: MSGSEPPSGDSGGAGGYAVFYPAGYQALNPEEHGLDRGFRLTAFSDMKGUGCKVPQETLLKLLQGLEPDRPPGEDGGLGTGVGDETADFGLVSAAQGPRLGIGMDSCVIPLRHGGLSLVQTTDFFYPLVEDPYMMGRIACANVLSDLYAMGITECDNMLMLLSVSQKMNEKERDLVLPLMMKGFRDAAEEGGTSVTGGQTVINPWIIIGGVASVVCQPNDFILPDGAVPGDVLVLTKPLGTQVAVNAHQWLDIPEKWNKIKLVISREEVEQAYQEAMLNMATLNRTAAALMHKFNAHAATDITGFGIIGHARNLAKQQKNDVAFVIHNLPIISKMAAISKAGGNLFGLLQGTSSETSGGLLICLPREQAARFCAEMKSSRMGLLGAGQDGGVGDGQQAWIIGIVEKGNRCARIIDKPRIIEVPYRGSVVSVQEGSNNNASPPEVQLA.

Sec50 is a catalytic residue. A non-standard amino acid (selenocysteine) is located at residue Sec50. ATP-binding positions include Lys53, Gly103–Asp105, Asp123, Asp146, and Gly197–Thr200. Residue Asp105 coordinates Mg(2+). Asp146 contacts Mg(2+). Asp301 is a binding site for Mg(2+).

Belongs to the selenophosphate synthase 1 family. In terms of assembly, homodimer. Requires Mg(2+) as cofactor. In terms of tissue distribution, in the embryo, expressed in retina, olfactory vesicles, tectum, pronephros ducts and myotomes at 24 hours post-fertilization and in retina, tectum, liver and intestinal bulb 3 days after fertilization.

The enzyme catalyses hydrogenselenide + ATP + H2O = selenophosphate + AMP + phosphate + 2 H(+). In terms of biological role, synthesizes selenophosphate from selenide and ATP. The polypeptide is Selenide, water dikinase 3 (Danio rerio (Zebrafish)).